A 306-amino-acid chain; its full sequence is tRNA pseudouridine synthase B (306 aa).

Residue Asp-48 is the Nucleophile of the active site.

It belongs to the pseudouridine synthase TruB family. Type 1 subfamily.

The catalysed reaction is uridine(55) in tRNA = pseudouridine(55) in tRNA. Functionally, responsible for synthesis of pseudouridine from uracil-55 in the psi GC loop of transfer RNAs. This Haemophilus influenzae (strain PittEE) protein is tRNA pseudouridine synthase B.